A 1639-amino-acid chain; its full sequence is MAPQPLEQGGAVTSFIPTGQEMAQRQNLIPLGRLIDFIIQRTYHELTVLAELLPRKTDMDRKIEIYNFSASTRQLFIRLLALVKWANSASKVDKSAKIMGFLDKQSMLFIDTADMLSRVARETLVHARLPNFHIPAAVEILTTGSYSRLPSVIRDRIVPPDPITPAEKRQTLQRLNQVIQHRLVTGSLLPQLRKFRIENGRVTFKVDHEFEVSLTVMGDAPTVPWRLLDIDFLVEDKETGDGKALVHPLQVNYIHQLIQGRIVDCTDALAEVYTCLHYFCQSLQLEVLYTQTLRLIRDRLDDHIHVDEYVVGSRLTVSYWRELTNKDPKSELGYRLTIQTDPNDAAKQLAILHVPSIGNKEADIADRAVRSDLLSMERLLVHTVYVRSLARLNDVKTELQLFLKDVEYNIQGTPAMLTVPVLNPCLRAEHIYITVDTHTGMLRCHVPKHLDCPIMPEMQHALNNDWSKLQHLISELRYWITQRRCEKTLQHLPAATQDRLPLIYSHTHPIARMGPHKVFIQLYRHANVILIVELKEKKTCPNEMTYTFYLVLVKPSSVEEGQSPDVLSGQPPQPSAAGGPAPGSDSANAAMPKMYLRVLSMIEFDTFVATHGPGTYIDDPSPTSTSGTSVKRKVSPLDNALSAIGPPLKQQKTIYPAYFIPELAHVVAMCDEKLPFVTLAKEFSMRKIPHGGLQVEANATSLVLKLLTLPQPKPPQAPPTPQQQQQQQQQQQQPGTSDAKSSGAGASANEPKTVHVPPIDKQVWNALLKRLLSVSVRAQVNKSNQTRLWTMELVFYGSPLPSLHHKEQGMRRAVYLQYEMQPVESVSKVVDQLLSDWSKIVYLYTLVHEFREQYNNEKYNLPSMVAIKSYSYTNLLLAYGPNKDVSVNICWDTEAKEFRLVFTGGNSAINAHSMMRDQLQAHLNHNYSLAQVVHMLHETYQPLSSIAKLPIIPHLAILQSPKIPVLSFCIIPQSPTLLRISFQGVYCLEVRFRGGGLCTIRDGAYSRFDRSHVVEEFTPTQGLKGFLSKYVDETAVFRRRSQSEDDNPPSPVTLEDPSAGAGNNGGGGGGGGGAGGGANTFLSGGTGMRGPQSPRDPGLRFAAPLTPPTSSNPHTPASPHPIGGGGGAGGAGGQGGQGGQGGQQQSHMNNFNMTSPPASHMPHPSPGGGLMPSSPLNAQPSPMAAHSPGPSSLSYMQSHTDGSPFAALSPAASNWPGSPGMPRPSPRPGQSPEHKVQTSHHYTSRVLPARSWAGAIPTTLTYEALDTLCRATPHPQKEVPGPELSPLERFLGSVFMRRQLQRIIHQEESLMAITSNEPGVVVFKADCLQYQVFLNPNHMQSLHLKVDQLPMGPMMDGKPPYQWAAQDLQILEQFFDHRVAAPPYRPAVMTSFTRMLNLPAKVLKDFIQIMRLDLMPELVQGNKWNVQFVLRVPPSATPIVPVGTTTILSHRQKILFFIQITRVPYLPNMEWKDAVTMLLPMVYDMNMNHTTLAERREPMPPQLTSAVSAHLRRFSECSVLLPDECSLFPAVHDLLLTLTLPNEPPAPGQMQMQLGGVMQPGGGPGVPGGPGGPMGGQIGGPTPQVVPQVGSSPSPMMHSPMQQMGGGGPQPGAYGGMVGGPGGGPQSGGPVGGGPGGPN.

An LXXLL motif 1 motif is present at residues 49 to 53; the sequence is LAELL. 2 disordered regions span residues 561–586 and 709–755; these read GQSP…GSDS and LPQP…KTVH. A compositionally biased stretch (low complexity) spans 575-586; the sequence is SAAGGPAPGSDS. A compositionally biased stretch (pro residues) spans 711 to 721; the sequence is QPKPPQAPPTP. Residues 722-748 show a composition bias toward low complexity; that stretch reads QQQQQQQQQQQQPGTSDAKSSGAGASA. The LXXLL motif 2 motif lies at 768–772; it reads LKRLL. 2 disordered regions span residues 1039–1243 and 1558–1639; these read RRSQ…HHYT and MQPG…GGPN. 2 stretches are compositionally biased toward gly residues: residues 1062-1088 and 1122-1142; these read GNNG…GTGM and IGGG…GQGG. The span at 1189–1201 shows a compositional bias: polar residues; sequence GPSSLSYMQSHTD. Over residues 1219 to 1229 the composition is skewed to pro residues; it reads PGMPRPSPRPG. The segment covering 1558–1579 has biased composition (gly residues); the sequence is MQPGGGPGVPGGPGGPMGGQIG. Residues 1589–1603 are compositionally biased toward low complexity; that stretch reads VGSSPSPMMHSPMQQ. Over residues 1604-1639 the composition is skewed to gly residues; the sequence is MGGGGPQPGAYGGMVGGPGGGPQSGGPVGGGPGGPN.

It belongs to the Mediator complex subunit 14 family. In terms of assembly, component of the Mediator complex.

It localises to the nucleus. In terms of biological role, component of the Mediator complex, a coactivator involved in the regulated transcription of nearly all RNA polymerase II-dependent genes. Mediator functions as a bridge to convey information from gene-specific regulatory proteins to the basal RNA polymerase II transcription machinery. Mediator is recruited to promoters by direct interactions with regulatory proteins and serves as a scaffold for the assembly of a functional preinitiation complex with RNA polymerase II and the general transcription factors. This chain is Mediator of RNA polymerase II transcription subunit 14 (MED14), found in Anopheles gambiae (African malaria mosquito).